The primary structure comprises 377 residues: Lactosylceramide 1,3-N-acetyl-beta-D-glucosaminyltransferase B (377 aa).

Over 1–13 the chain is Cytoplasmic; that stretch reads MLISARRLRRCQS. The helical; Signal-anchor for type II membrane protein transmembrane segment at 14 to 30 threads the bilayer; that stretch reads LQLLASCFVLSLMALLV. Residues 31-377 lie on the Lumenal side of the membrane; sequence QEDNSLVNHV…DTYPCSAAWS (347 aa). N-linked (GlcNAc...) asparagine glycosylation is found at Asn-56, Asn-167, and Asn-275.

The protein belongs to the glycosyltransferase 31 family.

The protein resides in the golgi apparatus membrane. The enzyme catalyses a beta-D-Gal-(1-&gt;4)-beta-D-Glc-(1&lt;-&gt;1)-Cer(d18:1(4E)) + UDP-N-acetyl-alpha-D-glucosamine = a beta-D-GlcNAc-(1-&gt;3)-beta-D-Gal-(1-&gt;4)-beta-D-Glc-(1&lt;-&gt;1)-Cer(d18:1(4E)) + UDP + H(+). It carries out the reaction a neolactoside nLc4Cer(d18:1(4E)) + UDP-N-acetyl-alpha-D-glucosamine = a neolactoside IV(3)-beta-GlcNAc-nLc4Cer(d18:1(4E)) + UDP + H(+). It participates in protein modification; protein glycosylation. In terms of biological role, beta-1,3-N-acetylglucosaminyltransferase that plays a key role in the synthesis of lacto- or neolacto-series carbohydrate chains on glycolipids. The sequence is that of Lactosylceramide 1,3-N-acetyl-beta-D-glucosaminyltransferase B (b3gnt5-b) from Xenopus laevis (African clawed frog).